A 432-amino-acid chain; its full sequence is MYFHGTTKVNEKGHLEIGGVDTIELAQKYGTPLYVYDVALIRERARGFKNTFDELGIKAQVAYASKAFSTVAMIQLAEEEGLSLDVVSGGELYTALVAGFPVHKIHFHGNNKSRAELEMALEHQIGCIVVDNFHELDLIDSICSEKNVKTNILLRVTPGIEAHTHDYILTGQEDSKFGFDLQNGQAEKALQIALNSNFVEVLGVHCHIGSQIFDTTGFVLAARKIFEKLKEWKDRLSYEPKVLNLGGGFGIRYTEEDDPIPASQYVKEIINEVKKQVSAYSMKMPEIWIEPGRSLVGDAGTTLYQIGSRKDVPNVRHYVAVDGGMSDNIRPALYNAKYEAVLANKPLAKADETVSIAGKCCESGDMLIWDLPLPKADSDDILAVFCTGAYGYSMANNYNRIPRPAVVFVENGESMLVVKRKHMRTSSAMICL.

An N6-(pyridoxal phosphate)lysine modification is found at lysine 66. Pyridoxal 5'-phosphate is bound by residues glycine 248 and 290 to 293; that span reads EPGR. Substrate-binding residues include arginine 293, arginine 330, and tyrosine 334. Cysteine 361 functions as the Proton donor in the catalytic mechanism. Positions 362 and 390 each coordinate substrate. A pyridoxal 5'-phosphate-binding site is contributed by tyrosine 390.

It belongs to the Orn/Lys/Arg decarboxylase class-II family. LysA subfamily. Homodimer. The cofactor is pyridoxal 5'-phosphate.

It catalyses the reaction meso-2,6-diaminopimelate + H(+) = L-lysine + CO2. It participates in amino-acid biosynthesis; L-lysine biosynthesis via DAP pathway; L-lysine from DL-2,6-diaminopimelate: step 1/1. In terms of biological role, specifically catalyzes the decarboxylation of meso-diaminopimelate (meso-DAP) to L-lysine. The sequence is that of Diaminopimelate decarboxylase from Bacillus methanolicus.